The sequence spans 122 residues: Large ribosomal subunit protein uL14 (122 aa).

Belongs to the universal ribosomal protein uL14 family. Part of the 50S ribosomal subunit. Forms a cluster with proteins L3 and L19. In the 70S ribosome, L14 and L19 interact and together make contacts with the 16S rRNA in bridges B5 and B8.

Its function is as follows. Binds to 23S rRNA. Forms part of two intersubunit bridges in the 70S ribosome. The polypeptide is Large ribosomal subunit protein uL14 (Polynucleobacter necessarius subsp. necessarius (strain STIR1)).